Reading from the N-terminus, the 196-residue chain is Transmembrane protein 126A (196 aa).

At 1-34 the chain is on the mitochondrial matrix side; the sequence is MENHKSNNTKENITIVDISRKINQLPEAERNLLE. Residues 35-55 traverse the membrane as a helical segment; that stretch reads HGSVYVGLNAALCGLIANSLF. The Mitochondrial intermembrane portion of the chain corresponds to 56 to 57; sequence RR. A helical membrane pass occupies residues 58 to 78; the sequence is ILNVTKARIAAGLPMAWIPFL. The Mitochondrial matrix segment spans residues 79–107; that stretch reads TTDITYRCFVSFPLNTGDLDCETCTITRS. The helical transmembrane segment at 108–128 threads the bilayer; the sequence is GLIGLVIGGLYPVFLAIPVNG. Topologically, residues 129-159 are mitochondrial intermembrane; sequence GLAARYQSALLPHKGNILSYWIRTSKPVFRK. The chain crosses the membrane as a helical span at residues 160 to 176; that stretch reads MLFPIMLQTMFSAYLGS. At 177 to 196 the chain is on the mitochondrial matrix side; it reads EQYKLLIKALQLSEPGKEIH.

It belongs to the TMEM126 family. Interacts with OXA1L; promoting cotranslational quality control in mitochondria.

The protein localises to the mitochondrion inner membrane. Functionally, protein required for the cotranslational protein quality control in the inner membrane of the mitochondria. Associates with newly synthesized polypeptides and may act as a chaperone that cooperates with OXA1L for the insertion of newly synthesized mitochondrial proteins into the inner membrane. Required for the assembly of the ND4 module of mitochondrial complex I. The sequence is that of Transmembrane protein 126A (TMEM126A) from Pongo abelii (Sumatran orangutan).